Consider the following 104-residue polypeptide: Thioredoxin (104 aa).

In terms of domain architecture, Thioredoxin spans 2 to 104 (AIVKATDQSF…ALQELVNKHL (103 aa)). Cysteine 29 and cysteine 32 are oxidised to a cystine.

Belongs to the thioredoxin family.

Its function is as follows. Participates in various redox reactions through the reversible oxidation of its active center dithiol to a disulfide and catalyzes dithiol-disulfide exchange reactions. The polypeptide is Thioredoxin (trxA) (Bacillus subtilis (strain 168)).